Reading from the N-terminus, the 172-residue chain is MNQDHPECDSEELTQNSPETDPLKVEVETLRGEIASIKADVLRERAELENQRKRLIRDVEQARKFANEKLLGELLPVFDSLDAGLTASGSEPSPLRDGLELTYKQLLKVATDNGLMLLDPVGQLFNPEHHQAISQTEVTDVEPGYVIQVFQKGYLLNERLLRPALVVVAKQD.

A disordered region spans residues M1 to L23.

This sequence belongs to the GrpE family. Homodimer.

It localises to the cytoplasm. Its function is as follows. Participates actively in the response to hyperosmotic and heat shock by preventing the aggregation of stress-denatured proteins, in association with DnaK and GrpE. It is the nucleotide exchange factor for DnaK and may function as a thermosensor. Unfolded proteins bind initially to DnaJ; upon interaction with the DnaJ-bound protein, DnaK hydrolyzes its bound ATP, resulting in the formation of a stable complex. GrpE releases ADP from DnaK; ATP binding to DnaK triggers the release of the substrate protein, thus completing the reaction cycle. Several rounds of ATP-dependent interactions between DnaJ, DnaK and GrpE are required for fully efficient folding. In Xylella fastidiosa (strain 9a5c), this protein is Protein GrpE.